We begin with the raw amino-acid sequence, 104 residues long: Large ribosomal subunit protein uL23 (104 aa).

Belongs to the universal ribosomal protein uL23 family. Part of the 50S ribosomal subunit. Contacts protein L29, and trigger factor when it is bound to the ribosome.

One of the early assembly proteins it binds 23S rRNA. One of the proteins that surrounds the polypeptide exit tunnel on the outside of the ribosome. Forms the main docking site for trigger factor binding to the ribosome. This is Large ribosomal subunit protein uL23 from Ralstonia pickettii (strain 12J).